The sequence spans 345 residues: MTDKTSLSYKDAGVDIDAGNALVDRIKGVVKKTRRSEVMGGLGGFGALCALPQKYREPVLVSGTDGVGTKLRLAMDLKRHDAIGIDLVAMCVNDLVVQGAEPLFFLDYYATGKLDVDTAASVINGIAEGCLQSGCALVGGETAEMPGMYHGEDYDVAGFCVGVVEKSEIIDGSRVAEGDVLIALGSSGPHSNGYSLVRKIIDVSGCDPQTTLLEGKPLADHLLEPTRIYVKSVLELIENIDVHAIAHLTGGGFWENIPRVLPENTQAVINESSWQWPAIFTWLRTAGNVSRHEMYRAFNCGVGMVIALSAPEADKALALLNEKGENAWKIGIIKASDSEQRVVIE.

Belongs to the AIR synthase family.

It localises to the cytoplasm. The catalysed reaction is 2-formamido-N(1)-(5-O-phospho-beta-D-ribosyl)acetamidine + ATP = 5-amino-1-(5-phospho-beta-D-ribosyl)imidazole + ADP + phosphate + H(+). It participates in purine metabolism; IMP biosynthesis via de novo pathway; 5-amino-1-(5-phospho-D-ribosyl)imidazole from N(2)-formyl-N(1)-(5-phospho-D-ribosyl)glycinamide: step 2/2. The protein is Phosphoribosylformylglycinamidine cyclo-ligase of Salmonella typhi.